The primary structure comprises 1029 residues: Toll-like receptor 9 (1029 aa).

The first 24 residues, 1 to 24, serve as a signal peptide directing secretion; that stretch reads MGPYCAPHPLSLLVQAAALAAALA. At 25 to 815 the chain is on the extracellular side; it reads QGTLPAFLPC…LCLDETLSLD (791 aa). Cys-34 and Cys-44 are disulfide-bonded. 46 to 50 provides a ligand contact to DNA; the sequence is WLFLK. LRR repeat units follow at residues 61 to 84, 86 to 109, 121 to 146, 149 to 165, 166 to 189, 197 to 220, 222 to 241, 242 to 267, 282 to 305, 307 to 331, 332 to 355, 362 to 385, 389 to 412, 414 to 439, 469 to 492, 494 to 517, 518 to 541, 543 to 570, 572 to 596, 598 to 620, 625 to 648, 650 to 673, 674 to 697, 699 to 721, 722 to 745, and 747 to 770; these read RANV…DFVH, SNLR…HFPC, VPTL…SLVS, LSRT…FTGL, HALR…AVEV, LGNL…LPPS, DTLL…DLAN, LTAL…CREC, LSRL…WFRG, GRLQ…IFRN, LTQL…HLQL, LVSL…TLRP, LPKL…IFGA, PSLL…LGEV, CNLN…MFTR, SRLQ…QFVP, LTRL…SFTE, PQLE…SFVA, LPSL…LSSA, LRAL…LYLC, LRNL…HLDN, PKSL…SLTV, LPQL…SLPP, TRLQ…FFVL, ANRL…WFGR, and TETL…AFVD. Asn-63 carries an N-linked (GlcNAc...) asparagine glycan. Residues 71-76 and 94-108 contribute to the DNA site; these read SNRIHH and KWNC…MHFP. A disulfide bond links Cys-97 and Cys-109. A glycan (N-linked (GlcNAc...) asparagine) is linked at Asn-128. Residues Tyr-131, Arg-151, and 178 to 180 each bind DNA; that span reads YYK. Cys-177 and Cys-183 are disulfide-bonded. The N-linked (GlcNAc...) asparagine glycan is linked to Asn-199. A DNA-binding site is contributed by Tyr-207. N-linked (GlcNAc...) asparagine glycosylation is found at Asn-209 and Asn-241. Cystine bridges form between Cys-254/Cys-267 and Cys-257/Cys-264. Residue Cys-257 is the site of S-palmitoyl cysteine attachment. Position 261 (Arg-261) interacts with DNA. Cys-264 carries S-palmitoyl cysteine lipidation. N-linked (GlcNAc...) asparagine glycosylation is found at Asn-331, Asn-339, and Asn-380. Cys-469 and Cys-498 are joined by a disulfide. Residues Asn-472 and Asn-511 are each glycosylated (N-linked (GlcNAc...) asparagine). N-linked (GlcNAc...) asparagine glycosylation is present at Asn-565. Asn-667 and Asn-692 each carry an N-linked (GlcNAc...) asparagine glycan. An N-linked (GlcNAc...) asparagine glycan is attached at Asn-729. Intrachain disulfides connect Cys-762–Cys-788 and Cys-764–Cys-807. A helical membrane pass occupies residues 816 to 836; it reads CFGFSLLMVALGLAVPMLHHL. The Cytoplasmic segment spans residues 837 to 1029; that stretch reads CGWDLWYCFH…NFCRGPTTAE (193 aa). A TIR domain is found at 864–1009; that stretch reads LLYDAFVVFD…SFWANLGMAL (146 aa).

This sequence belongs to the Toll-like receptor family. Monomer and homodimer. Exists as a monomer in the absence of unmethylated cytidine-phosphate-guanosine (CpG) ligand. Proteolytic processing of an insertion loop (Z-loop) is required for homodimerization upon binding to the unmethylated CpG ligand leading to its activation. Interacts with MYD88 via their respective TIR domains. Interacts with BTK. Interacts (via transmembrane domain) with UNC93B1. Interacts with CD300LH; the interaction may promote full activation of TLR9-triggered innate responses. Interacts with CNPY3 and HSP90B1; this interaction is required for proper folding in the endoplasmic reticulum. Interacts with SMPDL3B. Interacts with CD82; this interaction is essential for TLR9-dependent myddosome formation in response to CpG stimulation. Post-translationally, activated by proteolytic cleavage of the flexible loop between repeats LRR14 and LRR15 within the ectodomain. Cleavage requires UNC93B1. Proteolytically processed by first removing the majority of the ectodomain by either asparagine endopeptidase (AEP) or a cathepsin followed by a trimming event that is solely cathepsin mediated and required for optimal receptor signaling. In terms of processing, palmitoylated by ZDHHC3 in the Golgi regulates TLR9 trafficking from the Golgi to endosomes. Depalmitoylation by PPT1 controls the release of TLR9 from UNC93B1 in endosomes.

It is found in the endoplasmic reticulum membrane. The protein resides in the endosome. Its subcellular location is the lysosome. It localises to the cytoplasmic vesicle. The protein localises to the phagosome. Its function is as follows. Key component of innate and adaptive immunity. TLRs (Toll-like receptors) control host immune response against pathogens through recognition of molecular patterns specific to microorganisms. TLR9 is a nucleotide-sensing TLR which is activated by unmethylated cytidine-phosphate-guanosine (CpG) dinucleotides. Acts via MYD88 and TRAF6, leading to NF-kappa-B activation, cytokine secretion and the inflammatory response. Upon CpG stimulation, induces B-cell proliferation, activation, survival and antibody production. In Ovis aries (Sheep), this protein is Toll-like receptor 9 (TLR9).